Here is a 752-residue protein sequence, read N- to C-terminus: Two pore channel protein 2 (752 aa).

At 1 to 84 (MAEPQAESEP…RRYYSNVCQR (84 aa)) the chain is on the cytoplasmic side. Residues 85-105 (TLSFTIFLILFLAFIETPSSL) form a helical membrane-spanning segment. The Extracellular segment spans residues 106–127 (TSTADVRYRAAPWEPPCGLTES). The helical transmembrane segment at 128-148 (VEVLCLLVFAADLSVKGYLFG) threads the bilayer. The Cytoplasmic portion of the chain corresponds to 149–155 (WAHFQKN). The chain crosses the membrane as a helical span at residues 156 to 176 (LWLLGYLVVLVVSLVDWTVSL). Over 177–183 (SLVCHEP) the chain is Extracellular. Residues 184 to 204 (LRIRRLLRPFFLLQNSSMMKK) traverse the membrane as a helical segment. Positions 203–207 (KKTLK) are interaction with phosphatidylinositol 3,5-bisphosphate. The Cytoplasmic segment spans residues 205–218 (TLKCIRWSLPEMAS). Residues 219-239 (VGLLLAIHLCLFTMFGMLLFA) traverse the membrane as a helical segment. Topologically, residues 240–254 (GGKQDDGQDRERLTY) are extracellular. The segment at residues 255–279 (FQNLPESLTSLLVLLTTANNPDVMI) is an intramembrane region (helical; Pore-forming). Over 280–289 (PAYSKNRAYA) the chain is Extracellular. A helical membrane pass occupies residues 290 to 310 (IFFIVFTVIGSLFLMNLLTAI). The Cytoplasmic portion of the chain corresponds to 311–436 (IYSQFRGYLM…FLFGHYYFDY (126 aa)). Residues 437-459 (LGNLIALANLVSICVFLVLDADV) traverse the membrane as a helical segment. Residues 460–465 (LPAERD) lie on the Extracellular side of the membrane. Residues 466–486 (DFILGILNCVFIVYYLLEMLL) traverse the membrane as a helical segment. Topologically, residues 487 to 502 (KVFALGLRGYLSYPSN) are cytoplasmic. A helical membrane pass occupies residues 503 to 523 (VFDGLLTVVLLVLEISTLAVY). At 524–554 (RLPHPGWRPEMVGLLSLWDMTRMLNMLIVFR) the chain is on the extracellular side. Residues 555–575 (FLRIIPSMKLMAVVASTVLGL) form a helical membrane-spanning segment. Residues 576 to 580 (VQNMR) lie on the Cytoplasmic side of the membrane. The chain crosses the membrane as a helical span at residues 581–601 (AFGGILVVVYYVFAIIGINLF). The Extracellular segment spans residues 602 to 635 (RGVIVALPGNSSLAPANGSAPCGSFEQLEYWANN). N-linked (GlcNAc...) asparagine glycosylation is found at N611 and N618. An intramembrane region (helical; Pore-forming) is located at residues 636 to 658 (FDDFAAALVTLWNLMVVNNWQVF). Residues 659–673 (LDAYRRYSGPWSKIY) lie on the Extracellular side of the membrane. A helical membrane pass occupies residues 674 to 694 (FVLWWLVSSVIWVNLFLALIL). The Cytoplasmic portion of the chain corresponds to 695-752 (ENFLHKWDPRSHLQPLAGTPEATYQMTVELLFRDILEEPGEDELTERLSQHPHLWLCR).

The protein belongs to the calcium channel alpha-1 subunit (TC 1.A.1.11) family. Two pore calcium channel subfamily. Homodimer. Interacts with LRRK2. Interacts with HAX1. Interacts with MTOR; the interaction is required for TPCN2 ATP sensitivity. Found in a complex with LSM12, TPCN1 and TPCN2. Interacts with LSM12. N-glycosylated. Widely expressed. Expressed at high level in liver and kidney.

It is found in the late endosome membrane. The protein resides in the lysosome membrane. Its subcellular location is the melanosome membrane. It catalyses the reaction Na(+)(in) = Na(+)(out). The catalysed reaction is Ca(2+)(in) = Ca(2+)(out). With respect to regulation, regulated by Mg(2+) ions, cytosolic Mg(2+) selectively inhibits outward current while lysosomal Mg(2+) modestly inhibits both the outward and inward currents. In the absence of Mg(2+), NAADP readily activates TPCN2, with properties similar to PI(3,5)P2. Na(+) current is inhibited by ATP in a MTORC-dependent manner. ATP sensitivity is independent of PI(3,5)P2. Both current elicited by PI(3,5)P2 as well as NAADP are inhibited by tetrandrine. Its function is as follows. Intracellular channel initially characterized as a non-selective Ca(2+)-permeable channel activated by NAADP (nicotinic acid adenine dinucleotide phosphate), it is also a highly-selective Na(+) channel activated directly by PI(3,5)P2 (phosphatidylinositol 3,5-bisphosphate). Localizes to the lysosomal and late endosome membranes where it regulates organellar membrane excitability, membrane trafficking, and pH homeostasis. Is associated with a plethora of physiological processes, including mTOR-dependent nutrient sensing, skin pigmentation and autophagy. Ion selectivity is not fixed but rather agonist-dependent and under defined ionic conditions, can be readily activated by both NAADP and PI(3,5)P2. As calcium channel, it increases the pH in the lysosomal lumen, as sodium channel, it promotes lysosomal exocytosis. Plays a crucial role in endolysosomal trafficking in the endolysosomal degradation pathway and is potentially involved in the homeostatic control of many macromolecules and cell metabolites. Also expressed in melanosomes of pigmented cells where mediates a Ca(2+) channel and/or PI(3,5)P2-activated melanosomal Na(+) channel to acidify pH and inhibit tyrosinase activity required for melanogenesis and pigmentation. Unlike the voltage-dependent TPCN1, TPCN2 is voltage independent and can be activated solely by PI(3,5)P2 binding. In contrast, PI(4,5)P2, PI(3,4)P2, PI(3)P and PI(5)P have no obvious effect on channel activation. In terms of biological role, (Microbial infection) During Ebola virus (EBOV) infection, controls the movement of endosomes containing virus particles and is required by EBOV to escape from the endosomal network into the cell cytoplasm. Functionally, (Microbial infection) Required for cell entry of coronaviruses SARS-CoV and SARS-CoV-2, as well as human coronavirus EMC (HCoV-EMC), by endocytosis. The polypeptide is Two pore channel protein 2 (Homo sapiens (Human)).